Consider the following 413-residue polypeptide: Histidine--tRNA ligase (413 aa).

The protein belongs to the class-II aminoacyl-tRNA synthetase family. Homodimer.

Its subcellular location is the cytoplasm. It carries out the reaction tRNA(His) + L-histidine + ATP = L-histidyl-tRNA(His) + AMP + diphosphate + H(+). This Neorickettsia sennetsu (strain ATCC VR-367 / Miyayama) (Ehrlichia sennetsu) protein is Histidine--tRNA ligase.